Here is a 406-residue protein sequence, read N- to C-terminus: Phosphopentomutase (406 aa).

6 residues coordinate Mn(2+): Asp10, Asp305, His310, Asp346, His347, and His358.

This sequence belongs to the phosphopentomutase family. The cofactor is Mn(2+).

The protein resides in the cytoplasm. It carries out the reaction 2-deoxy-alpha-D-ribose 1-phosphate = 2-deoxy-D-ribose 5-phosphate. The enzyme catalyses alpha-D-ribose 1-phosphate = D-ribose 5-phosphate. It participates in carbohydrate degradation; 2-deoxy-D-ribose 1-phosphate degradation; D-glyceraldehyde 3-phosphate and acetaldehyde from 2-deoxy-alpha-D-ribose 1-phosphate: step 1/2. Isomerase that catalyzes the conversion of deoxy-ribose 1-phosphate (dRib-1-P) and ribose 1-phosphate (Rib-1-P) to deoxy-ribose 5-phosphate (dRib-5-P) and ribose 5-phosphate (Rib-5-P), respectively. The protein is Phosphopentomutase of Vibrio vulnificus (strain CMCP6).